The chain runs to 78 residues: Exodeoxyribonuclease 7 small subunit (78 aa).

It belongs to the XseB family. As to quaternary structure, heterooligomer composed of large and small subunits.

It localises to the cytoplasm. It carries out the reaction Exonucleolytic cleavage in either 5'- to 3'- or 3'- to 5'-direction to yield nucleoside 5'-phosphates.. Bidirectionally degrades single-stranded DNA into large acid-insoluble oligonucleotides, which are then degraded further into small acid-soluble oligonucleotides. The polypeptide is Exodeoxyribonuclease 7 small subunit (Nocardia farcinica (strain IFM 10152)).